The primary structure comprises 667 residues: Transmembrane 9 superfamily member 1 (667 aa).

Residues 1 to 22 (MIYKMAHVQLLLLYFFVSTVKA) form the signal peptide. Residues 23–302 (FYLPGVAPTT…DKYLHVYDPS (280 aa)) are Lumenal-facing. Asn-61 and Asn-282 each carry an N-linked (GlcNAc...) asparagine glycan. The chain crosses the membrane as a helical span at residues 303–323 (IQWFSLINFSLVVVLLSSVVI). The Cytoplasmic portion of the chain corresponds to 324–370 (HSLLRALKSDFARYNELNLDDDFQEDSGWKLNHGDVFRSPSQSLTLS). A helical transmembrane segment spans residues 371 to 391 (ILVGSGVQLFLMVTCSIFFAA). Residues 392–405 (LGFLSPSSRGSLAT) are Lumenal-facing. The chain crosses the membrane as a helical span at residues 406-426 (VMFILYALFGFVGSYTSMGIY). Topologically, residues 427–442 (KFFNGPYWKANLILTP) are cytoplasmic. A helical membrane pass occupies residues 443–463 (LLVPGAILLIIIALNFFLMFV). At 464 to 474 (HSSGVIPASTL) the chain is on the lumenal side. Residues 475–495 (FFMVFLWFLFSIPLSFAGSLI) form a helical membrane-spanning segment. The Cytoplasmic segment spans residues 496–527 (ARKRCHWDEHPTKTNQIARQIPFQPWYLKTIP). A helical transmembrane segment spans residues 528 to 548 (ATLIAGIFPFGSIAVELYFIY). Residues 549 to 560 (TSLWFNKIFYMF) lie on the Lumenal side of the membrane. The helical transmembrane segment at 561–581 (GFLFFSFLLLTLTSSLVTILI) threads the bilayer. Topologically, residues 582–596 (TYHSLCLENWKWQWR) are cytoplasmic. Residues 597-617 (GFIIGGAGCALYVFIHSILFT) form a helical membrane-spanning segment. Over 618 to 635 (KFKLGGFTTIVLYVGYSS) the chain is Lumenal. The helical transmembrane segment at 636–656 (VISLLCCLVTGSIGFISSMLF) threads the bilayer. The Cytoplasmic portion of the chain corresponds to 657-667 (VRKIYSSIKVD).

This sequence belongs to the nonaspanin (TM9SF) (TC 9.A.2) family.

The protein resides in the endosome membrane. The protein localises to the vacuole membrane. Functionally, with TMN2 and TMN3, plays a critical role in the late stages of a nutrient-controlled pathway notably regulating FLO11 gene expression. Acts downstream of RAS2 and TOR. Essential for cell adhesion and filamentous growth. May play a role as effector of cellular copper homeostasis. The sequence is that of Transmembrane 9 superfamily member 1 (EMP70) from Saccharomyces cerevisiae (strain ATCC 204508 / S288c) (Baker's yeast).